Consider the following 156-residue polypeptide: Acyl carrier protein, mitochondrial (156 aa).

Residues 1-68 (MASRVLSAYV…GRVTQLCRQY (68 aa)) constitute a mitochondrion transit peptide. The 76-residue stretch at 77–152 (EGIQDRVLYV…EIVDYIADKK (76 aa)) folds into the Carrier domain. Lys88 is subject to N6-acetyllysine. Residue Ser112 is modified to O-(pantetheine 4'-phosphoryl)serine.

This sequence belongs to the acyl carrier protein (ACP) family. In terms of assembly, mammalian complex I is composed of 45 different subunits. Interacts with ETFRF1. Identified in a complex composed of MALSU1, MIEF1 upstream open reading frame protein and NDUFAB1; within the trimeric complex, MIEF1 upstream open reading frame protein functions as a bridging scaffold that interacts with MALSU1 on one side, and with NDUFAB1 on the other side. The complex interacts with the mitochondrial large ribosomal subunit. Interacts with alpha-1-microglobulin chain; this interaction is required for the maintenance of mitochondrial redox homeostasis. Component of the mitochondrial core iron-sulfur cluster (ISC) complex composed of NFS1, LYRM4, NDUFAB1, ISCU, FXN, and FDX2; this complex is a heterohexamer containing two copies of each monomer. Component of the cyteine desulfurase complex composed of NFS1, LYRM4 and NDUFAB1; this complex contributes to the stability and cysteine desulfurase activity of NFS1. In terms of processing, phosphopantetheinylation at Ser-112 is essential for interactions with LYR motif-containing proteins.

It is found in the mitochondrion. Functionally, carrier of the growing fatty acid chain in fatty acid biosynthesis. Accessory and non-catalytic subunit of the mitochondrial membrane respiratory chain NADH dehydrogenase (Complex I), which functions in the transfer of electrons from NADH to the respiratory chain. Accessory protein, of the core iron-sulfur cluster (ISC) assembly complex, that regulates, in association with LYRM4, the stability and the cysteine desulfurase activity of NFS1 and participates in the [2Fe-2S] clusters assembly on the scaffolding protein ISCU. The core iron-sulfur cluster (ISC) assembly complex is involved in the de novo synthesis of a [2Fe-2S] cluster, the first step of the mitochondrial iron-sulfur protein biogenesis. This process is initiated by the cysteine desulfurase complex (NFS1:LYRM4:NDUFAB1) that produces persulfide which is delivered on the scaffold protein ISCU in a FXN-dependent manner. Then this complex is stabilized by FDX2 which provides reducing equivalents to accomplish the [2Fe-2S] cluster assembly. Finally, the [2Fe-2S] cluster is transferred from ISCU to chaperone proteins, including HSCB, HSPA9 and GLRX5. This chain is Acyl carrier protein, mitochondrial, found in Gorilla gorilla gorilla (Western lowland gorilla).